Here is a 518-residue protein sequence, read N- to C-terminus: Glucose-1-phosphate adenylyltransferase large subunit 2, cytosolic (518 aa).

This sequence belongs to the bacterial/plant glucose-1-phosphate adenylyltransferase family. In terms of assembly, heterotetramer composed of two small and two large subunits.

Its subcellular location is the cytoplasm. It is found in the cytosol. It carries out the reaction alpha-D-glucose 1-phosphate + ATP + H(+) = ADP-alpha-D-glucose + diphosphate. Its pathway is glycan biosynthesis; starch biosynthesis. With respect to regulation, activated by 3'phosphoglycerate, inhibited by orthophosphate. Allosteric regulation. Inhibited by inorganic phosphate (Pi). Functionally, involved in synthesis of starch. Catalyzes the synthesis of ADP-glucose, a molecule that serves as an activated glycosyl donor for alpha-1,4-glucan synthesis. Essential for starch synthesis in seed endosperm. Is essential for both catalytic and allosteric regulatory properties of the cytosolic heterotetramer enzyme. This chain is Glucose-1-phosphate adenylyltransferase large subunit 2, cytosolic, found in Oryza sativa subsp. japonica (Rice).